Here is a 167-residue protein sequence, read N- to C-terminus: MADPARAAKLAQRIKVVVAEALGRRVKDPRVESITVTDARVTNDLQHATIYYTVFGDDVAQADAARALEKAKGVLRQEVGRNITVRLTPTLEFVADQIPVNASNLEELLREAKRRDAEVAALAASAKHAGEADPYKGDSPEDIDEDDFDEEDTDLSGDNDLDEDANR.

Residues 122–167 are disordered; sequence LAASAKHAGEADPYKGDSPEDIDEDDFDEEDTDLSGDNDLDEDANR. Positions 128–139 are enriched in basic and acidic residues; sequence HAGEADPYKGDS. A compositionally biased stretch (acidic residues) spans 140-167; that stretch reads PEDIDEDDFDEEDTDLSGDNDLDEDANR.

This sequence belongs to the RbfA family. In terms of assembly, monomer. Binds 30S ribosomal subunits, but not 50S ribosomal subunits or 70S ribosomes.

The protein localises to the cytoplasm. Functionally, one of several proteins that assist in the late maturation steps of the functional core of the 30S ribosomal subunit. Associates with free 30S ribosomal subunits (but not with 30S subunits that are part of 70S ribosomes or polysomes). Required for efficient processing of 16S rRNA. May interact with the 5'-terminal helix region of 16S rRNA. The sequence is that of Ribosome-binding factor A from Paenarthrobacter aurescens (strain TC1).